The chain runs to 328 residues: GMP reductase (328 aa).

The active-site Thioimidate intermediate is the Cys176. 205–228 (IIADGGIRTHGDVAKSIRFGATMV) serves as a coordination point for NADP(+).

This sequence belongs to the IMPDH/GMPR family. GuaC type 2 subfamily.

The enzyme catalyses IMP + NH4(+) + NADP(+) = GMP + NADPH + 2 H(+). Catalyzes the irreversible NADPH-dependent deamination of GMP to IMP. It functions in the conversion of nucleobase, nucleoside and nucleotide derivatives of G to A nucleotides, and in maintaining the intracellular balance of A and G nucleotides. This Bacillus cereus (strain ATCC 14579 / DSM 31 / CCUG 7414 / JCM 2152 / NBRC 15305 / NCIMB 9373 / NCTC 2599 / NRRL B-3711) protein is GMP reductase.